The primary structure comprises 212 residues: Methylthioribulose-1-phosphate dehydratase (212 aa).

Zn(2+) contacts are provided by H97 and H99.

It belongs to the aldolase class II family. MtnB subfamily. As to quaternary structure, homotetramer. Requires Zn(2+) as cofactor.

It catalyses the reaction 5-(methylsulfanyl)-D-ribulose 1-phosphate = 5-methylsulfanyl-2,3-dioxopentyl phosphate + H2O. The protein operates within amino-acid biosynthesis; L-methionine biosynthesis via salvage pathway; L-methionine from S-methyl-5-thio-alpha-D-ribose 1-phosphate: step 2/6. Catalyzes the dehydration of methylthioribulose-1-phosphate (MTRu-1-P) into 2,3-diketo-5-methylthiopentyl-1-phosphate (DK-MTP-1-P). The chain is Methylthioribulose-1-phosphate dehydratase from Bacillus cereus (strain G9842).